Reading from the N-terminus, the 436-residue chain is Eukaryotic translation initiation factor 4B (436 aa).

The tract at residues 56–98 (AKNNSNNTRSGGFGGSFGGRSRLDPALGGGSSDRREEYPVPDA) is disordered. Phosphoserine occurs at positions 65 and 71. The RRM domain occupies 101–183 (YRAVINNIPW…RTVYVSVAAP (83 aa)). A disordered region spans residues 185 to 406 (RGGGADVDWS…EKQNGDAKEN (222 aa)). A 1; approximate repeat occupies 190 to 210 (DVDWSSARGSNFQGDGREDAP). The tract at residues 190 to 350 (DVDWSSARGS…DWGAARGAQF (161 aa)) is 7 X approximate tandem repeats. 5 repeat units span residues 211-232 (DLDW…REEV), 233-258 (DIDW…REEV), 259-284 (DIDW…REEP), 285-310 (DIDW…REEP), and 311-340 (DIDW…EPAL). The segment covering 329–338 (PRREREKEEP) has biased composition (basic and acidic residues). The stretch at 341–350 (DWGAARGAQF) is one 7; truncated repeat. Basic and acidic residues-rich tracts occupy residues 359–376 (TYKD…EQPK) and 397–406 (EKQNGDAKEN).

In terms of biological role, involved in translation initiation. May be the homolog of mammalian eIF4B and be part of an RNA helicase. STM1/TIF3 is a non-essential gene. This chain is Eukaryotic translation initiation factor 4B (TIF3), found in Saccharomyces cerevisiae (strain ATCC 204508 / S288c) (Baker's yeast).